The primary structure comprises 256 residues: 6-phosphogluconolactonase (256 aa).

This sequence belongs to the glucosamine/galactosamine-6-phosphate isomerase family. 6-phosphogluconolactonase subfamily.

It catalyses the reaction 6-phospho-D-glucono-1,5-lactone + H2O = 6-phospho-D-gluconate + H(+). It participates in carbohydrate degradation; pentose phosphate pathway; D-ribulose 5-phosphate from D-glucose 6-phosphate (oxidative stage): step 2/3. Its function is as follows. Hydrolysis of 6-phosphogluconolactone to 6-phosphogluconate. The chain is 6-phosphogluconolactonase (pgl) from Chlamydia trachomatis serovar D (strain ATCC VR-885 / DSM 19411 / UW-3/Cx).